The chain runs to 287 residues: Putative ABC transporter ATP-binding protein MM_1038 (287 aa).

In terms of domain architecture, ABC transporter spans 5 to 238 (LENISVFYSR…ENVPLPPVAS (234 aa)). 40 to 47 (GEKGAGKS) contacts ATP.

Belongs to the ABC transporter superfamily.

The protein resides in the cell membrane. Functionally, probably part of an ABC transporter complex. Responsible for energy coupling to the transport system. This Methanosarcina mazei (strain ATCC BAA-159 / DSM 3647 / Goe1 / Go1 / JCM 11833 / OCM 88) (Methanosarcina frisia) protein is Putative ABC transporter ATP-binding protein MM_1038.